A 454-amino-acid chain; its full sequence is Death-associated protein kinase 3 (454 aa).

Residues 13-275 (YEMGEELGSG…IAQSLEHSWI (263 aa)) form the Protein kinase domain. Residues 19–27 (LGSGQFAIV) and Lys42 each bind ATP. Ser50 carries the phosphoserine; by autocatalysis modification. Positions 94 and 96 each coordinate pyridone 6. Residue Asp139 is the Proton acceptor of the active site. Residues 161–204 (DFGIAHKIEAGNEFKNIFGTPEFVAPEIVNYEPLGLEADMWSIG) form an activation segment region. Residues Thr180 and Thr225 each carry the phosphothreonine modification. Position 265 is a phosphothreonine; by autocatalysis and ROCK1 (Thr265). A Phosphothreonine; by autocatalysis, DAPK1 and ROCK1 modification is found at Thr299. Phosphothreonine; by autocatalysis is present on Thr306. Phosphoserine; by DAPK1 is present on Ser309. Ser311 is modified (phosphoserine; by autocatalysis and DAPK1). A phosphoserine; by DAPK1 mark is found at Ser312, Ser318, and Ser326. The tract at residues 427–441 (VASEMRFVQDLVRAL) is leucine-zipper.

It belongs to the protein kinase superfamily. CAMK Ser/Thr protein kinase family. DAP kinase subfamily. In terms of assembly, homooligomer in its kinase-active form (homotrimers and homodimers are reported); monomeric in its kinase-inactive form. Homodimerization is required for activation segment autophosphorylation. Isoform 1 and isoform 2 interact with myosin and PPP1R12A; interaction of isoform 1 with PPP1R12A is inhibited by RhoA dominant negative form. Interacts with NLK, DAXX, STAT3, RHOD (GTP-bound form) and TCP10L. Interacts with PAWR; the interaction is reported conflictingly: according to PubMed:17953487 does not interact with PAWR. Interacts with ULK1; may be a substrate of ULK1. Interacts with LUZP1; the interaction is likely to occur throughout the cell cycle and reduces the LUZP1-mediated suppression of MYL9 phosphorylation. The cofactor is Mg(2+). The phosphorylation status is critical for kinase activity, oligomerization and intracellular localization. Phosphorylation at Thr-180, Thr-225 and Thr-265 is essential for activity. The phosphorylated form is localized in the cytoplasm promoted by phosphorylation at Thr-299; nuclear translocation or retention is maximal when it is not phosphorylated. Phosphorylation increases the trimeric form, and its dephosphorylation favors a kinase-inactive monomeric form. Both isoform 1 and isoform 2 can undergo autophosphorylation. In terms of tissue distribution, widely expressed. Isoform 1 and isoform 2 are expressed in the bladder smooth muscle.

The protein resides in the nucleus. It is found in the PML body. It localises to the cytoplasm. Its subcellular location is the cytoskeleton. The protein localises to the microtubule organizing center. The protein resides in the centrosome. It is found in the chromosome. It localises to the centromere. Its subcellular location is the spindle. The protein localises to the midbody. The catalysed reaction is L-seryl-[protein] + ATP = O-phospho-L-seryl-[protein] + ADP + H(+). The enzyme catalyses L-threonyl-[protein] + ATP = O-phospho-L-threonyl-[protein] + ADP + H(+). With respect to regulation, a sequential activation is proposed: autophosphorylation at consensus sites is leading to dimerization of the catalytic domain stabilized by phosphorylation at Ser-50 and activation segment exchange (producing an active confirmation of both kinase modules in trans) followed by phosphorylation at Thr-180 in the activation segment and at other regulatory sites. Phosphorylation at Thr-180, Thr-225 and Thr-265 is essential for activity. Oligomerization is required for full enzymatic activity. Inhibited by pyridone-6 (K00225), a potent, ATP-competitive inhibitor. Functionally, serine/threonine kinase which is involved in the regulation of apoptosis, autophagy, transcription, translation and actin cytoskeleton reorganization. Involved in the regulation of smooth muscle contraction. Regulates both type I (caspase-dependent) apoptotic and type II (caspase-independent) autophagic cell deaths signal, depending on the cellular setting. Involved in regulation of starvation-induced autophagy. Regulates myosin phosphorylation in both smooth muscle and non-muscle cells. In smooth muscle, regulates myosin either directly by phosphorylating MYL12B and MYL9 or through inhibition of smooth muscle myosin phosphatase (SMPP1M) via phosphorylation of PPP1R12A; the inhibition of SMPP1M functions to enhance muscle responsiveness to Ca(2+) and promote a contractile state. Phosphorylates MYL12B in non-muscle cells leading to reorganization of actin cytoskeleton. Isoform 2 can phosphorylate myosin, PPP1R12A and MYL12B. Overexpression leads to condensation of actin stress fibers into thick bundles. Involved in actin filament focal adhesion dynamics. The function in both reorganization of actin cytoskeleton and focal adhesion dissolution is modulated by RhoD. Positively regulates canonical Wnt/beta-catenin signaling through interaction with NLK and TCF7L2. Phosphorylates RPL13A on 'Ser-77' upon interferon-gamma activation which is causing RPL13A release from the ribosome, RPL13A association with the GAIT complex and its subsequent involvement in transcript-selective translation inhibition. Enhances transcription from AR-responsive promoters in a hormone- and kinase-dependent manner. Involved in regulation of cell cycle progression and cell proliferation. May be a tumor suppressor. The polypeptide is Death-associated protein kinase 3 (DAPK3) (Homo sapiens (Human)).